The chain runs to 366 residues: Nitronate monooxygenase (366 aa).

Residues asparagine 74, glutamine 181, glycine 186, glycine 223, and 242 to 245 (QLGT) each bind FMN.

The protein belongs to the nitronate monooxygenase family. NMO class I subfamily. FMN serves as cofactor.

The catalysed reaction is 3 propionate 3-nitronate + 3 O2 + H2O = 3 3-oxopropanoate + 2 nitrate + nitrite + H2O2 + 3 H(+). Nitronate monooxygenase that uses molecular oxygen to catalyze the oxidative denitrification of alkyl nitronates. Acts on propionate 3-nitronate (P3N), the presumed physiological substrate. Is likely involved in the degradation of P3N, that allows B.phytofirmans PsJN to grow on 3-nitropropionate/P3N as the sole source of nitrogen and carbon. Also probably functions in the detoxification of P3N, a metabolic poison produced by plants and fungi as a defense mechanism. Cannot oxidize nitroalkanes such as 3-nitropropionate, nitroethane, or 1-nitropropane. The sequence is that of Nitronate monooxygenase from Paraburkholderia phytofirmans (strain DSM 17436 / LMG 22146 / PsJN) (Burkholderia phytofirmans).